Reading from the N-terminus, the 297-residue chain is Polyketide transferase ATR5 (297 aa).

Residues 49–272 form an abhydrolase domain region; the sequence is DVAVWFQKRG…FVLAENKGHM (224 aa).

Belongs to the polyketide transferase af380 family.

It participates in mycotoxin biosynthesis. Polyketide transferase; part of the core atranone cluster (CAC) which products are predicted to catalyze most or all steps of atranone synthesis, starting from geranylgeranyl pyrophosphate (GGPP). The initial cyclization of GGPP to dolabellane is probably performed by the terpene cyclase ATR13. The Baeyer-Villiger oxidation near the end of the atranone synthesis, which converts atranones D and E to atranones F and G is predicted to be catalyzed by the monooxygenase ATR8. Of the CAC's other predicted gene products, the reducing PKS ATR6 might synthesize a polyketide chain. This polyketide is probably transferred onto the atranone backbone by the polyketide transferase ATR5. Other predicted CAC products include 4 oxygenases (ATR2, ATR3, ATR4, and ATR14), 3 short-chain reductases (ATR7, ATR9, and ATR10), and a methyltransferase (ATR12). These may all be involved in the various steps of atranone biosynthesis, although their specific roles must await experimental determination. This Stachybotrys chlorohalonatus (strain IBT 40285) protein is Polyketide transferase ATR5.